Here is a 752-residue protein sequence, read N- to C-terminus: Double zinc ribbon and ankyrin repeat-containing protein 1 (752 aa).

Phosphoserine is present on residues Ser160 and Ser182. The segment at 164–187 is disordered; it reads IPAYGGGSGSRPPTRQSQSPGFAH. Over residues 174 to 183 the composition is skewed to polar residues; that stretch reads RPPTRQSQSP. DZANK-type zinc fingers lie at residues 211-270 and 339-387; these read CAHC…CVVC and CYRC…GSCG. ANK repeat units follow at residues 605-636 and 640-669; these read ENRL…DPNC and DNRP…DIDQ.

In terms of assembly, interacts with NINL isoform 2. Associates with DYNC1H1 and multiple dynein intermediate and light chains as well as actin-binding proteins.

The protein resides in the cytoplasm. It localises to the cytoskeleton. Its subcellular location is the microtubule organizing center. It is found in the centrosome. The protein localises to the cilium basal body. Involved in vesicle transport in photoreceptor cells. This is Double zinc ribbon and ankyrin repeat-containing protein 1 from Homo sapiens (Human).